A 130-amino-acid chain; its full sequence is Large ribosomal subunit protein bL12 (130 aa).

This sequence belongs to the bacterial ribosomal protein bL12 family. As to quaternary structure, homodimer. Part of the ribosomal stalk of the 50S ribosomal subunit. Forms a multimeric L10(L12)X complex, where L10 forms an elongated spine to which 2 to 4 L12 dimers bind in a sequential fashion. Binds GTP-bound translation factors.

Functionally, forms part of the ribosomal stalk which helps the ribosome interact with GTP-bound translation factors. Is thus essential for accurate translation. In Mycobacterium bovis (strain ATCC BAA-935 / AF2122/97), this protein is Large ribosomal subunit protein bL12.